The sequence spans 274 residues: Large ribosomal subunit protein uL2 (274 aa).

The tract at residues Val-223 to Lys-274 is disordered.

The protein belongs to the universal ribosomal protein uL2 family. In terms of assembly, part of the 50S ribosomal subunit. Forms a bridge to the 30S subunit in the 70S ribosome.

Its function is as follows. One of the primary rRNA binding proteins. Required for association of the 30S and 50S subunits to form the 70S ribosome, for tRNA binding and peptide bond formation. It has been suggested to have peptidyltransferase activity; this is somewhat controversial. Makes several contacts with the 16S rRNA in the 70S ribosome. This chain is Large ribosomal subunit protein uL2, found in Shewanella baltica (strain OS223).